We begin with the raw amino-acid sequence, 734 residues long: Photosystem I P700 chlorophyll a apoprotein A2 (734 aa).

Helical transmembrane passes span 46–69, 135–158, 175–199, 273–291, 330–353, 369–395, 417–439, and 517–535; these read IFASHFGQLAIIFLWTSGNLFHVA, LYTGALFLLFLSAISLIAGWLHLQ, LNHHLSGLFGVSSLAWTGHLVHVAI, IAHHHLAIAFVFLVAGHMY, IHFQLGLALASLGVITSLVAQHMY, AALYTHHQYIAGFIMTGAFAHGAIFFI, AIKSHLSWASLFLGFHTLGLYVH, and FLVHHAIALGLHTTTLILV. Residues Cys-559 and Cys-568 each contribute to the [4Fe-4S] cluster site. 2 helical membrane passes run 575–596 and 643–665; these read AFYLAVFWMLNTIGWVTFYWHW and LSVWAWMFLFGHLVWATGFMFLI. The chlorophyll a site is built by His-654, Met-662, and Tyr-670. Residue Trp-671 coordinates phylloquinone. Residues 707–727 form a helical membrane-spanning segment; sequence LVGLAHFSVGYIFTYAAFLIA.

This sequence belongs to the PsaA/PsaB family. As to quaternary structure, the PsaA/B heterodimer binds the P700 chlorophyll special pair and subsequent electron acceptors. PSI consists of a core antenna complex that captures photons, and an electron transfer chain that converts photonic excitation into a charge separation. The eukaryotic PSI reaction center is composed of at least 11 subunits. Requires P700 is a chlorophyll a/chlorophyll a' dimer, A0 is one or more chlorophyll a, A1 is one or both phylloquinones and FX is a shared 4Fe-4S iron-sulfur center. as cofactor.

The protein localises to the plastid. The protein resides in the chloroplast thylakoid membrane. The catalysed reaction is reduced [plastocyanin] + hnu + oxidized [2Fe-2S]-[ferredoxin] = oxidized [plastocyanin] + reduced [2Fe-2S]-[ferredoxin]. PsaA and PsaB bind P700, the primary electron donor of photosystem I (PSI), as well as the electron acceptors A0, A1 and FX. PSI is a plastocyanin-ferredoxin oxidoreductase, converting photonic excitation into a charge separation, which transfers an electron from the donor P700 chlorophyll pair to the spectroscopically characterized acceptors A0, A1, FX, FA and FB in turn. Oxidized P700 is reduced on the lumenal side of the thylakoid membrane by plastocyanin. This chain is Photosystem I P700 chlorophyll a apoprotein A2, found in Amborella trichopoda.